Reading from the N-terminus, the 406-residue chain is MVSVTHCDSLWFGADIITMRGGNYQLIPQGAIAVTGDKIVWIGPHAELPPIHAARQVVYEGGLITPGLIDCHTHLVFGGDRSNEFEQRLNGVSYAEIAANGGGIISTVRATRQASEQQLLEQALFRLKPLLAEGVTTIEIKSGYGLNLESEIKMLRVARRLGELLPIDVKTTCLAAHALPPEFIGQPDDYIDVVCNSIIPQVAVENLADAVDAFCEHLAFSPAQVERVFLAAQKAGLPVKLHAEQLSALRGATLAAKFHAISADHLEYATESDVQAMANAGTVAVLLPGAYYLLRETQCPPIDLFRQYKVPMALASDANPGTSPVLSLRLMLNMACTLFRMTPEEALAGVTCHAAQALGVQQTQGTLETGKLANWVHWPLSHPAELAYWLGGQLPATVVFRGEVRP.

2 residues coordinate Fe(3+): His72 and His74. Residues His72 and His74 each contribute to the Zn(2+) site. Residues Arg81, Tyr144, and His177 each coordinate 4-imidazolone-5-propanoate. An N-formimidoyl-L-glutamate-binding site is contributed by Tyr144. His242 serves as a coordination point for Fe(3+). Residue His242 coordinates Zn(2+). Gln245 serves as a coordination point for 4-imidazolone-5-propanoate. Asp317 provides a ligand contact to Fe(3+). Asp317 contributes to the Zn(2+) binding site. N-formimidoyl-L-glutamate contacts are provided by Asn319 and Gly321. Thr322 provides a ligand contact to 4-imidazolone-5-propanoate.

Belongs to the metallo-dependent hydrolases superfamily. HutI family. The cofactor is Zn(2+). Requires Fe(3+) as cofactor.

It localises to the cytoplasm. The catalysed reaction is 4-imidazolone-5-propanoate + H2O = N-formimidoyl-L-glutamate. The protein operates within amino-acid degradation; L-histidine degradation into L-glutamate; N-formimidoyl-L-glutamate from L-histidine: step 3/3. In terms of biological role, catalyzes the hydrolytic cleavage of the carbon-nitrogen bond in imidazolone-5-propanoate to yield N-formimidoyl-L-glutamate. It is the third step in the universal histidine degradation pathway. The polypeptide is Imidazolonepropionase (Yersinia pseudotuberculosis serotype O:3 (strain YPIII)).